Consider the following 227-residue polypeptide: Ribonuclease 3 (227 aa).

Residues 7–132 form the RNase III domain; it reads LTAFMDRLGY…VIAAVYLDGG (126 aa). Mg(2+) is bound at residue E45. Residue D49 is part of the active site. Mg(2+) is bound by residues D118 and E121. E121 is an active-site residue. One can recognise a DRBM domain in the interval 157 to 226; the sequence is DAKTALQEWA…AKDLLAQLAG (70 aa).

This sequence belongs to the ribonuclease III family. In terms of assembly, homodimer. It depends on Mg(2+) as a cofactor.

It is found in the cytoplasm. The catalysed reaction is Endonucleolytic cleavage to 5'-phosphomonoester.. Its function is as follows. Digests double-stranded RNA. Involved in the processing of primary rRNA transcript to yield the immediate precursors to the large and small rRNAs (23S and 16S). Processes some mRNAs, and tRNAs when they are encoded in the rRNA operon. Processes pre-crRNA and tracrRNA of type II CRISPR loci if present in the organism. This is Ribonuclease 3 from Jannaschia sp. (strain CCS1).